A 514-amino-acid chain; its full sequence is Transmembrane protein 151B (514 aa).

Positions 1–40 are disordered; that stretch reads MSAEGEPAEAVAETPANSPGEEAAAAAATTDVDVREEQRP. Helical transmembrane passes span 57 to 77, 104 to 124, and 286 to 306; these read CLLL…CQVT, YVYI…VECW, and PWYV…SWPL.

The protein belongs to the TMEM151 family.

The protein resides in the membrane. The chain is Transmembrane protein 151B (tmem151b) from Xenopus tropicalis (Western clawed frog).